Consider the following 264-residue polypeptide: tRNA pseudouridine synthase A (264 aa).

Asp-51 (nucleophile) is an active-site residue. Tyr-109 contacts substrate.

This sequence belongs to the tRNA pseudouridine synthase TruA family. In terms of assembly, homodimer.

It carries out the reaction uridine(38/39/40) in tRNA = pseudouridine(38/39/40) in tRNA. In terms of biological role, formation of pseudouridine at positions 38, 39 and 40 in the anticodon stem and loop of transfer RNAs. The sequence is that of tRNA pseudouridine synthase A from Polaromonas naphthalenivorans (strain CJ2).